The primary structure comprises 260 residues: 2-amino-5-formylamino-6-ribosylaminopyrimidin-4(3H)-one 5'-monophosphate deformylase (260 aa).

Residues Glu33, His35, Asp44, and His112 each coordinate Fe cation.

The protein belongs to the creatininase superfamily. FAPy deformylase family. In terms of assembly, homodimer. It depends on Fe(2+) as a cofactor. Zn(2+) serves as cofactor.

The enzyme catalyses 2-amino-5-formylamino-6-(5-phospho-D-ribosylamino)pyrimidin-4(3H)-one + H2O = 2,5-diamino-6-(1-D-ribosylamino)pyrimidin-4(3H)-one 5'-phosphate + formate + H(+). The protein operates within cofactor biosynthesis; coenzyme F420 biosynthesis. It functions in the pathway cofactor biosynthesis; riboflavin biosynthesis. Catalyzes the hydrolysis of the formamide of 2-amino-5-formylamino-6-ribosylamino-4(3H)-pyrimidinone 5'-monophosphate (FAPy) to form 2,5-diamino-6-ribosylamino-4(3H)-pyrimidinone 5'-phosphate (APy). This chain is 2-amino-5-formylamino-6-ribosylaminopyrimidin-4(3H)-one 5'-monophosphate deformylase, found in Methanococcus voltae (strain ATCC BAA-1334 / A3).